A 382-amino-acid polypeptide reads, in one-letter code: Phenylalanine dehydrogenase (382 aa).

An NAD(+)-binding site is contributed by arginine 54. Lysine 78 provides a ligand contact to L-phenylalanine. Lysine 90 acts as the Proton donor/acceptor in catalysis. NAD(+) contacts are provided by residues aspartate 125, serine 156, threonine 160, glycine 190–tyrosine 196, aspartate 213–isoleucine 214, alanine 253–phenylalanine 254, and serine 274–asparagine 276. Position 276 (asparagine 276) interacts with L-phenylalanine.

Belongs to the Glu/Leu/Phe/Val dehydrogenases family.

It carries out the reaction L-phenylalanine + NAD(+) + H2O = 3-phenylpyruvate + NH4(+) + NADH + H(+). Its activity is regulated as follows. Activity is not affected by the metal chelating agent EDTA. Addition of 1 mM Mg(2+) results in 15% increase in activity, while the enzyme is strongly inhibited by 1 mM Fe(3+), Fe(2+), Cu(2+), Zn(2+) and Ag(+). Catalyzes the reversible NAD(+)-dependent oxidative deamination of L-phenylalanine to phenylpyruvate. Can also catalyze the oxidative deamination of several other amino acids, with much lower efficiency. Shows activity towards various bulky aromatic alpha-keto acids/esters and (S)-amine alcohols. Can catalyze the amination of 3-(2-chlorophenyl)-2-oxopropionic acid (CPOA) to produce 2-chloro-L-phenylalanine (2-Cl-Phe), a chemical compound used in the pharmaceutical and biotechnology industries. Shows a preference for amination over deamination. The polypeptide is Phenylalanine dehydrogenase (Bacillus thermotolerans (Quasibacillus thermotolerans)).